A 95-amino-acid chain; its full sequence is MSVDAQTVRRIAHLARIAVSDAEVPPLQDELNAILAFVEQLGAVDVSGVEPMTSVTPMAMKQREDAVTDGGYARDIVFNAPLTEDNYFLVPKVVE.

This sequence belongs to the GatC family. Heterotrimer of A, B and C subunits.

The enzyme catalyses L-glutamyl-tRNA(Gln) + L-glutamine + ATP + H2O = L-glutaminyl-tRNA(Gln) + L-glutamate + ADP + phosphate + H(+). The catalysed reaction is L-aspartyl-tRNA(Asn) + L-glutamine + ATP + H2O = L-asparaginyl-tRNA(Asn) + L-glutamate + ADP + phosphate + 2 H(+). Its function is as follows. Allows the formation of correctly charged Asn-tRNA(Asn) or Gln-tRNA(Gln) through the transamidation of misacylated Asp-tRNA(Asn) or Glu-tRNA(Gln) in organisms which lack either or both of asparaginyl-tRNA or glutaminyl-tRNA synthetases. The reaction takes place in the presence of glutamine and ATP through an activated phospho-Asp-tRNA(Asn) or phospho-Glu-tRNA(Gln). This is Aspartyl/glutamyl-tRNA(Asn/Gln) amidotransferase subunit C from Methylobacterium nodulans (strain LMG 21967 / CNCM I-2342 / ORS 2060).